A 209-amino-acid chain; its full sequence is ATP-dependent dethiobiotin synthetase BioD (209 aa).

ATP is bound at residue D13–V18. Residue T17 coordinates Mg(2+). K33 is a catalytic residue. 2 residues coordinate Mg(2+): R47 and E100. ATP-binding positions include E100 to G103 and P184 to L186.

This sequence belongs to the dethiobiotin synthetase family. In terms of assembly, homodimer. Mg(2+) serves as cofactor.

It localises to the cytoplasm. The enzyme catalyses (7R,8S)-7,8-diammoniononanoate + CO2 + ATP = (4R,5S)-dethiobiotin + ADP + phosphate + 3 H(+). The protein operates within cofactor biosynthesis; biotin biosynthesis; biotin from 7,8-diaminononanoate: step 1/2. Catalyzes a mechanistically unusual reaction, the ATP-dependent insertion of CO2 between the N7 and N8 nitrogen atoms of 7,8-diaminopelargonic acid (DAPA, also called 7,8-diammoniononanoate) to form a ureido ring. In Rhodopseudomonas palustris (strain BisB18), this protein is ATP-dependent dethiobiotin synthetase BioD.